The sequence spans 314 residues: Malate dehydrogenase (314 aa).

Residues 7–13 (GAAGGIG) and aspartate 34 each bind NAD(+). Substrate contacts are provided by arginine 81 and arginine 87. Residues asparagine 94 and 117-119 (ITN) each bind NAD(+). Residues asparagine 119 and arginine 153 each coordinate substrate. Histidine 177 (proton acceptor) is an active-site residue. Methionine 230 serves as a coordination point for NAD(+).

The protein belongs to the LDH/MDH superfamily. MDH type 1 family. In terms of assembly, homodimer.

The catalysed reaction is (S)-malate + NAD(+) = oxaloacetate + NADH + H(+). Catalyzes the reversible oxidation of malate to oxaloacetate. In Glaesserella parasuis serovar 5 (strain SH0165) (Haemophilus parasuis), this protein is Malate dehydrogenase.